We begin with the raw amino-acid sequence, 439 residues long: UDP-N-acetylmuramoylalanine--D-glutamate ligase (439 aa).

116 to 122 (GSNGKTT) serves as a coordination point for ATP.

The protein belongs to the MurCDEF family.

The protein localises to the cytoplasm. The enzyme catalyses UDP-N-acetyl-alpha-D-muramoyl-L-alanine + D-glutamate + ATP = UDP-N-acetyl-alpha-D-muramoyl-L-alanyl-D-glutamate + ADP + phosphate + H(+). Its pathway is cell wall biogenesis; peptidoglycan biosynthesis. In terms of biological role, cell wall formation. Catalyzes the addition of glutamate to the nucleotide precursor UDP-N-acetylmuramoyl-L-alanine (UMA). This Shewanella oneidensis (strain ATCC 700550 / JCM 31522 / CIP 106686 / LMG 19005 / NCIMB 14063 / MR-1) protein is UDP-N-acetylmuramoylalanine--D-glutamate ligase.